A 188-amino-acid polypeptide reads, in one-letter code: Putative protein SSX9 (188 aa).

The KRAB-related domain maps to 20-83 (KIQKAFDDIA…TGATDLQGND (64 aa)). The tract at residues 114 to 165 (KKPAEVGNDSKEVPEASGLQNDGKQLCPPGKPTTSEKINKASGPKRGKHAWT) is disordered. Basic and acidic residues predominate over residues 115 to 127 (KPAEVGNDSKEVP). Residue serine 123 is modified to Phosphoserine. Residues 156–165 (GPKRGKHAWT) are compositionally biased toward basic residues.

Belongs to the SSX family. As to expression, not detected in any normal or tumor tissues.

Could act as a modulator of transcription. This is Putative protein SSX9 from Homo sapiens (Human).